Consider the following 449-residue polypeptide: Clusterin (449 aa).

An N-terminal signal peptide occupies residues 1 to 22 (MMKTLLLFVGLLLTWESGQVLG). A Nuclear localization signal motif is present at residues 78 to 81 (KKKK). N-linked (GlcNAc...) (complex) asparagine glycosylation is present at Asn-86. Disulfide bonds link Cys-102–Cys-313, Cys-113–Cys-305, Cys-116–Cys-302, Cys-121–Cys-295, and Cys-129–Cys-285. The N-linked (GlcNAc...) asparagine glycan is linked to Asn-103. Ser-133 bears the Phosphoserine mark. Residues Asn-145, Asn-291, and Asn-354 are each glycosylated (N-linked (GlcNAc...) asparagine). A glycan (N-linked (GlcNAc...) (complex) asparagine) is linked at Asn-374. A Phosphoserine modification is found at Ser-396. Residues 443–447 (RKKHR) carry the Nuclear localization signal motif.

Belongs to the clusterin family. In terms of assembly, antiparallel disulfide-linked heterodimer of an alpha chain and a beta chain. Self-associates and forms higher oligomers. Interacts with a broad range of misfolded proteins, including APP, APOC2 and LYZ. Slightly acidic pH promotes interaction with misfolded proteins. Forms high-molecular weight oligomers upon interaction with misfolded proteins. Interacts with APOA1, LRP2, CLUAP1 and PON1. Interacts with the complement membrane attack complex. Interacts (via alpha chain) with XRCC6. Interacts with SYVN1, COMMD1, BTRC, CUL1 and with ubiquitin and SCF (SKP1-CUL1-F-box protein) E3 ubiquitin-protein ligase complexes. Interacts (via alpha chain) with BAX in stressed cells, where BAX undergoes a conformation change leading to association with the mitochondrial membrane. Does not interact with BAX in unstressed cells. Found in a complex with LTF, CLU, EPPIN and SEMG1. Interacts (immaturely glycosylated pre-secreted form) with HSPA5; this interaction promotes CLU stability and facilitates stress-induced CLU retrotranslocation from the secretory pathway to the mitochondria, thereby reducing stress-induced apoptosis by stabilizing mitochondrial membrane integrity. Interacts (isoform 4) with BCL2L1; this interaction releases and activates BAX and promotes cell death. Interacts with TGFBR2 and ACVR1. Interacts (secreted form) with STMN3; this interaction may act as an important modulator during neuronal differentiation. Interacts with VLDLR and LRP8. Proteolytically cleaved on its way through the secretory system, probably within the Golgi lumen. Proteolytic cleavage is not necessary for its chaperone activity. All non-secreted forms are not proteolytically cleaved. Chaperone activity of uncleaved forms is dependent on a non-reducing environment. In terms of processing, polyubiquitinated, leading to proteasomal degradation. Under cellular stress, the intracellular level of cleaved form is reduced due to proteasomal degradation. Post-translationally, extensively glycosylated with sulfated N-linked carbohydrates. About 30% of the protein mass is comprised of complex N-linked carbohydrate. Endoplasmic reticulum (ER) stress induces changes in glycosylation status and increases level of hypoglycosylated forms. Core carbohydrates are essential for chaperone activity. Non-secreted forms are hypoglycosylated or unglycosylated. Detected in blood plasma, cerebrospinal fluid, milk, seminal plasma and colon mucosa. Detected in the germinal center of colon lymphoid nodules and in colon parasympathetic ganglia of the Auerbach plexus (at protein level). Ubiquitous. Detected in brain, testis, ovary, liver and pancreas, and at lower levels in kidney, heart, spleen and lung.

It localises to the secreted. The protein localises to the cytoplasm. It is found in the nucleus. Its subcellular location is the mitochondrion membrane. The protein resides in the cytosol. It localises to the microsome. The protein localises to the endoplasmic reticulum. It is found in the mitochondrion. Its subcellular location is the perinuclear region. The protein resides in the cytoplasmic vesicle. It localises to the secretory vesicle. The protein localises to the chromaffin granule. In terms of biological role, functions as extracellular chaperone that prevents aggregation of non native proteins. Prevents stress-induced aggregation of blood plasma proteins. Inhibits formation of amyloid fibrils by APP, APOC2, B2M, CALCA, CSN3, SNCA and aggregation-prone LYZ variants (in vitro). Does not require ATP. Maintains partially unfolded proteins in a state appropriate for subsequent refolding by other chaperones, such as HSPA8/HSC70. Does not refold proteins by itself. Binding to cell surface receptors triggers internalization of the chaperone-client complex and subsequent lysosomal or proteasomal degradation. Protects cells against apoptosis and against cytolysis by complement: inhibits assembly of the complement membrane attack complex (MAC) by preventing polymerization of C9 pore component of the MAC complex. Intracellular forms interact with ubiquitin and SCF (SKP1-CUL1-F-box protein) E3 ubiquitin-protein ligase complexes and promote the ubiquitination and subsequent proteasomal degradation of target proteins. Promotes proteasomal degradation of COMMD1 and IKBKB. Modulates NF-kappa-B transcriptional activity. A mitochondrial form suppresses BAX-dependent release of cytochrome c into the cytoplasm and inhibit apoptosis. Plays a role in the regulation of cell proliferation. An intracellular form suppresses stress-induced apoptosis by stabilizing mitochondrial membrane integrity through interaction with HSPA5. Secreted form does not affect caspase or BAX-mediated intrinsic apoptosis and TNF-induced NF-kappa-B-activity. Secreted form act as an important modulator during neuronal differentiation through interaction with STMN3. Plays a role in the clearance of immune complexes that arise during cell injury. Does not affect caspase or BAX-mediated intrinsic apoptosis and TNF-induced NF-kappa-B-activity. Its function is as follows. Does not affect caspase or BAX-mediated intrinsic apoptosis and TNF-induced NF-kappa-B-activity. Promotes cell death through interaction with BCL2L1 that releases and activates BAX. This is Clusterin from Homo sapiens (Human).